A 284-amino-acid polypeptide reads, in one-letter code: MRVLKTIPEVRQSITEERRLGFSIGLVPTMGALHNGHIALVRRARAMCDRVLVSIFVNPKQFGPDEDFDKYPRDLKGDCALLEEAGVEYLFTPSVEEMWPPGNETIVNVEKLSRMLIGKLRPGHFCGVTSVVAKLFNIVQPDKAFFGEKDFQQILIVRRMVEDLAFPIEVVGVPVLREADGVASSSRNQFLTLEDRKAAKIIPESGKAAENLYRQGERSVDKLCKIVRDILQQESRAIIESIDLRDMETLSVVKGRLDKSAVLLLTVRFGEIRLIDQYILQEKG.

Met-30 to His-37 provides a ligand contact to ATP. His-37 serves as the catalytic Proton donor. A (R)-pantoate-binding site is contributed by Gln-61. Gln-61 is a binding site for beta-alanine. Residue Gly-147 to Asp-150 coordinates ATP. A (R)-pantoate-binding site is contributed by Gln-153. ATP-binding positions include Leu-176 and Ser-184–Arg-187.

Belongs to the pantothenate synthetase family. As to quaternary structure, homodimer.

The protein resides in the cytoplasm. It carries out the reaction (R)-pantoate + beta-alanine + ATP = (R)-pantothenate + AMP + diphosphate + H(+). It functions in the pathway cofactor biosynthesis; (R)-pantothenate biosynthesis; (R)-pantothenate from (R)-pantoate and beta-alanine: step 1/1. Catalyzes the condensation of pantoate with beta-alanine in an ATP-dependent reaction via a pantoyl-adenylate intermediate. This Bartonella henselae (strain ATCC 49882 / DSM 28221 / CCUG 30454 / Houston 1) (Rochalimaea henselae) protein is Pantothenate synthetase.